Here is a 159-residue protein sequence, read N- to C-terminus: Ribosomal RNA large subunit methyltransferase H (159 aa).

S-adenosyl-L-methionine is bound by residues L76, G108, and 127–132 (MSKMTF).

It belongs to the RNA methyltransferase RlmH family. Homodimer.

It localises to the cytoplasm. It catalyses the reaction pseudouridine(1915) in 23S rRNA + S-adenosyl-L-methionine = N(3)-methylpseudouridine(1915) in 23S rRNA + S-adenosyl-L-homocysteine + H(+). Specifically methylates the pseudouridine at position 1915 (m3Psi1915) in 23S rRNA. This is Ribosomal RNA large subunit methyltransferase H from Ureaplasma parvum serovar 3 (strain ATCC 27815 / 27 / NCTC 11736).